The chain runs to 208 residues: Guanylate kinase (208 aa).

The 179-residue stretch at 4-182 folds into the Guanylate kinase-like domain; that stretch reads GQLYIISAPS…ALEELKSVFR (179 aa). Residue 11-18 participates in ATP binding; sequence APSGAGKT.

This sequence belongs to the guanylate kinase family.

The protein resides in the cytoplasm. The catalysed reaction is GMP + ATP = GDP + ADP. Essential for recycling GMP and indirectly, cGMP. This Hahella chejuensis (strain KCTC 2396) protein is Guanylate kinase.